Reading from the N-terminus, the 150-residue chain is Anti-sigma F factor (150 aa).

It belongs to the anti-sigma-factor family.

The catalysed reaction is L-seryl-[protein] + ATP = O-phospho-L-seryl-[protein] + ADP + H(+). The enzyme catalyses L-threonyl-[protein] + ATP = O-phospho-L-threonyl-[protein] + ADP + H(+). Binds to sigma F and blocks its ability to form an RNA polymerase holoenzyme (E-sigma F). Phosphorylates SpoIIAA on a serine residue. This phosphorylation may enable SpoIIAA to act as an anti-anti-sigma factor that counteracts SpoIIAB and thus releases sigma F from inhibition. This chain is Anti-sigma F factor, found in Pasteuria penetrans.